The following is a 370-amino-acid chain: DNA replication and repair protein RecF (370 aa).

30–37 is a binding site for ATP; that stretch reads GENAQGKT.

It belongs to the RecF family.

The protein resides in the cytoplasm. The RecF protein is involved in DNA metabolism; it is required for DNA replication and normal SOS inducibility. RecF binds preferentially to single-stranded, linear DNA. It also seems to bind ATP. This Bacillus velezensis (strain DSM 23117 / BGSC 10A6 / LMG 26770 / FZB42) (Bacillus amyloliquefaciens subsp. plantarum) protein is DNA replication and repair protein RecF.